The following is a 256-amino-acid chain: GTP cyclohydrolase FolE2 (256 aa).

The protein belongs to the GTP cyclohydrolase IV family.

It carries out the reaction GTP + H2O = 7,8-dihydroneopterin 3'-triphosphate + formate + H(+). The protein operates within cofactor biosynthesis; 7,8-dihydroneopterin triphosphate biosynthesis; 7,8-dihydroneopterin triphosphate from GTP: step 1/1. Its function is as follows. Converts GTP to 7,8-dihydroneopterin triphosphate. This is GTP cyclohydrolase FolE2 from Maridesulfovibrio salexigens (strain ATCC 14822 / DSM 2638 / NCIMB 8403 / VKM B-1763) (Desulfovibrio salexigens).